The sequence spans 119 residues: uncharacterized protein (119 aa).

This is an uncharacterized protein from Aquifex aeolicus (strain VF5).